The sequence spans 329 residues: Indolepyruvate C-methyltransferase (329 aa).

This sequence belongs to the methyltransferase superfamily.

It catalyses the reaction indole-3-pyruvate + S-adenosyl-L-methionine = (R)-3-(indol-3-yl)-2-oxobutanoate + S-adenosyl-L-homocysteine + H(+). Strongly inhibited by the thiol reagents p-chloromercuribenzoate and N-ethylmaleimide. Partially inhibited by o-phenanthroline and 2,2'-dipyridyl. Competitively inhibited by L-tryptophan and indolmycin. Its function is as follows. Involved in the biosynthesis of the antibiotic indolmycin, an inhibitor of the bacterial tryptophan-tRNA synthetases. Catalyzes the transfer of a methyl group from S-adenosyl-L-methionine to position 3 of the aliphatic side chain of (indol-3-yl)pyruvate to yield 3-methylindolepyruvate. In Streptomyces griseus, this protein is Indolepyruvate C-methyltransferase.